The sequence spans 362 residues: 3-dehydroquinate synthase (362 aa).

NAD(+) is bound by residues G95–D99, T119–T120, K132, and K141. Positions 174, 238, and 255 each coordinate Zn(2+).

It belongs to the sugar phosphate cyclases superfamily. Dehydroquinate synthase family. It depends on Co(2+) as a cofactor. Zn(2+) is required as a cofactor. Requires NAD(+) as cofactor.

It localises to the cytoplasm. It carries out the reaction 7-phospho-2-dehydro-3-deoxy-D-arabino-heptonate = 3-dehydroquinate + phosphate. The protein operates within metabolic intermediate biosynthesis; chorismate biosynthesis; chorismate from D-erythrose 4-phosphate and phosphoenolpyruvate: step 2/7. Functionally, catalyzes the conversion of 3-deoxy-D-arabino-heptulosonate 7-phosphate (DAHP) to dehydroquinate (DHQ). This is 3-dehydroquinate synthase from Chlorobium luteolum (strain DSM 273 / BCRC 81028 / 2530) (Pelodictyon luteolum).